Reading from the N-terminus, the 177-residue chain is MSRVANNPISIPKGVEVTIADGIVTAKGKNGLLSRTVPAELGVDLEGGTLSIRYNKNDQRQNALAGTTRANLANMIVGVSNGFERKLSLVGVGYRAQAKGDVLSLSLGFSHPVEFKVPAGVVVETPSQTDIVVKGADRQVVGQVAADIRAFRAPEPYKGKGVRYADEVIIRKEAKKK.

This sequence belongs to the universal ribosomal protein uL6 family. In terms of assembly, part of the 50S ribosomal subunit.

This protein binds to the 23S rRNA, and is important in its secondary structure. It is located near the subunit interface in the base of the L7/L12 stalk, and near the tRNA binding site of the peptidyltransferase center. This chain is Large ribosomal subunit protein uL6, found in Methylococcus capsulatus (strain ATCC 33009 / NCIMB 11132 / Bath).